The chain runs to 262 residues: MEGFSLRINQFLAHYTKHSRREAEKLVLEGRVKINHEHAKLASVVKENDRVFLDKRLIKPLKNKKFSVLVYHKPKGELVSKADPLKRRVIYESLEKKYAHFAPVGRLDFASEGVLLLSDSKAVVSALMHADLEKEYLIKIQGFVTREMENAMQEGLKLENATKGAHQKTPIKSMEFAPFIGYEIIKNHAKYSKLRVIINEGKNRELRRFFAFFNAGVLDLRRVRYGFVNLNALPVGKMRFLNRQEYNELHAFMANAANVKGD.

The S4 RNA-binding domain occupies Leu6 to Val70. The active-site Nucleophile is the Asp108.

Belongs to the pseudouridine synthase RsuA family.

The catalysed reaction is a uridine in RNA = a pseudouridine in RNA. This is an uncharacterized protein from Helicobacter pylori (strain ATCC 700392 / 26695) (Campylobacter pylori).